Reading from the N-terminus, the 501-residue chain is Glycerol kinase (501 aa).

Residue T12 participates in ADP binding. Residues T12, T13, and S14 each contribute to the ATP site. T12 contacts sn-glycerol 3-phosphate. R16 is a binding site for ADP. Residues R82, E83, Y134, and D244 each contribute to the sn-glycerol 3-phosphate site. Residues R82, E83, Y134, D244, and Q245 each coordinate glycerol. 2 residues coordinate ADP: T266 and G310. The ATP site is built by T266, G310, Q314, and G411. Residues G411 and N415 each contribute to the ADP site.

The protein belongs to the FGGY kinase family.

It carries out the reaction glycerol + ATP = sn-glycerol 3-phosphate + ADP + H(+). Its pathway is polyol metabolism; glycerol degradation via glycerol kinase pathway; sn-glycerol 3-phosphate from glycerol: step 1/1. With respect to regulation, inhibited by fructose 1,6-bisphosphate (FBP). Functionally, key enzyme in the regulation of glycerol uptake and metabolism. Catalyzes the phosphorylation of glycerol to yield sn-glycerol 3-phosphate. The sequence is that of Glycerol kinase from Methylorubrum populi (strain ATCC BAA-705 / NCIMB 13946 / BJ001) (Methylobacterium populi).